Consider the following 863-residue polypeptide: MHQSGSVSLCRSAISVLVATALYSPIALASTVEYGETVDGVVLEKDIQLVYGTANNTKINPGGEQHIKEFGVSNNTEINGGYQYIEMNGAAEYSVLNDGYQIVQMGGAANQTTLNNGVLQVYGAANDTTIKGGRLIVEKDGGAVFVAIEKGGLLEVKEGGFAFAVDQKAGGAIKTTTRAMEVFGTNRLGQFDIKNGIANNMLLENGGSLRVEENDFAYNTTVDSGGLLEVMDGGTVTGVDKKAGGKLIVSTNALEVSGPNSKGQFSIKDGVSKNYELDDGSGLIVMEDTQAIDTILDKHATMQSLGKDTGTKVQANAVYDLGRSYQNGSITYSSKAISENMVINNGRANVWAGTMVNVSVRGNDGILEVMKPQINYAPAMLVGKVVVSEGASFRTHGAVDTSKADVSLENSVWTIIADITTTNQNTLLNLANLAMSDANVIMMDEPVTRSSVTASAENFITLTTNTLSGNGNFYMRTDMANHQSDQLNVTGQATGDFKIFVTDTGASPAAGDSLTLVTTGGGDAAFTLGNAGGVVDIGTYEYTLLDNGNHSWSLAENRAQITPSTTDVLNMAAAQPLVFDAELDTVRERLGSVKGVSYDTAMWSSAINTRNNVTTDAGAGFEQTLTGLTLGIDSRFSREESSTIRGLIFGYSHSDIGFDRGGKGNIDSYTLGAYAGWEHQNGAYVDGVVKVDRFANTIHGKMSNGATAFGDYNSNGAGAHVESGFRWVDGLWSVRPYLAFTGFTTDGQDYTLSNGMRADVGNTRILRAEAGTAVSYHMDLQNGTTLEPWLKAAVRQEYADSNQVKVNDDGKFNNDVAGTSGVYQAGIRSSFTPTLSGHLSVSYGNGAGVESPWNTQAGVVWTF.

A signal peptide spans 1 to 29 (MHQSGSVSLCRSAISVLVATALYSPIALA). The Autotransporter domain maps to 595 to 863 (GVSYDTAMWS…NTQAGVVWTF (269 aa)).

Its subcellular location is the cell outer membrane. This is an uncharacterized protein from Escherichia coli (strain K12).